The following is a 142-amino-acid chain: Large ribosomal subunit protein uL16 (142 aa).

Over residues 1 to 14 (MLSPRRTKFRKQQR) the composition is skewed to basic residues. The disordered stretch occupies residues 1–22 (MLSPRRTKFRKQQRGRMTGKAT).

Belongs to the universal ribosomal protein uL16 family. In terms of assembly, part of the 50S ribosomal subunit.

Functionally, binds 23S rRNA and is also seen to make contacts with the A and possibly P site tRNAs. The sequence is that of Large ribosomal subunit protein uL16 from Synechococcus elongatus (strain ATCC 33912 / PCC 7942 / FACHB-805) (Anacystis nidulans R2).